Here is a 248-residue protein sequence, read N- to C-terminus: Probable transcriptional regulatory protein Oant_1200 (248 aa).

This sequence belongs to the TACO1 family.

Its subcellular location is the cytoplasm. The polypeptide is Probable transcriptional regulatory protein Oant_1200 (Brucella anthropi (strain ATCC 49188 / DSM 6882 / CCUG 24695 / JCM 21032 / LMG 3331 / NBRC 15819 / NCTC 12168 / Alc 37) (Ochrobactrum anthropi)).